The following is a 313-amino-acid chain: Ribosomal RNA small subunit methyltransferase H (313 aa).

S-adenosyl-L-methionine is bound by residues Gly-35 to His-37, Asp-55, Phe-79, Asp-101, and Gln-108.

This sequence belongs to the methyltransferase superfamily. RsmH family.

The protein resides in the cytoplasm. It catalyses the reaction cytidine(1402) in 16S rRNA + S-adenosyl-L-methionine = N(4)-methylcytidine(1402) in 16S rRNA + S-adenosyl-L-homocysteine + H(+). In terms of biological role, specifically methylates the N4 position of cytidine in position 1402 (C1402) of 16S rRNA. This Salmonella typhi protein is Ribosomal RNA small subunit methyltransferase H.